The chain runs to 141 residues: Large ribosomal subunit protein uL11 (141 aa).

It belongs to the universal ribosomal protein uL11 family. In terms of assembly, part of the ribosomal stalk of the 50S ribosomal subunit. Interacts with L10 and the large rRNA to form the base of the stalk. L10 forms an elongated spine to which L12 dimers bind in a sequential fashion forming a multimeric L10(L12)X complex. In terms of processing, one or more lysine residues are methylated.

In terms of biological role, forms part of the ribosomal stalk which helps the ribosome interact with GTP-bound translation factors. The chain is Large ribosomal subunit protein uL11 from Exiguobacterium sp. (strain ATCC BAA-1283 / AT1b).